Reading from the N-terminus, the 255-residue chain is 3-dehydroquinate dehydratase (255 aa).

Residues 47-49 (EWR) and arginine 83 each bind 3-dehydroquinate. Histidine 144 serves as the catalytic Proton donor/acceptor. Residue lysine 171 is the Schiff-base intermediate with substrate of the active site. Arginine 214, serine 233, and glutamine 237 together coordinate 3-dehydroquinate.

It belongs to the type-I 3-dehydroquinase family. As to quaternary structure, homodimer.

It catalyses the reaction 3-dehydroquinate = 3-dehydroshikimate + H2O. Its pathway is metabolic intermediate biosynthesis; chorismate biosynthesis; chorismate from D-erythrose 4-phosphate and phosphoenolpyruvate: step 3/7. Involved in the third step of the chorismate pathway, which leads to the biosynthesis of aromatic amino acids. Catalyzes the cis-dehydration of 3-dehydroquinate (DHQ) and introduces the first double bond of the aromatic ring to yield 3-dehydroshikimate. The chain is 3-dehydroquinate dehydratase from Alkaliphilus oremlandii (strain OhILAs) (Clostridium oremlandii (strain OhILAs)).